We begin with the raw amino-acid sequence, 596 residues long: Capsid protein VP1 (596 aa).

This sequence belongs to the microviridae F protein family.

The protein resides in the virion. The protein localises to the host cytoplasm. In terms of biological role, assembles to form an icosahedral capsid with a T=1 symmetry. The protein is Capsid protein VP1 of Chlamydia phage 1 (Bacteriophage Chp1).